The primary structure comprises 366 residues: Isocitrate dehydrogenase [NAD] subunit alpha, mitochondrial (366 aa).

Residues 1–27 (MAGPAWISKVSRLLGAFHNQKQVTRGF) constitute a mitochondrion transit peptide. Position 77 is an N6-succinyllysine (Lys-77). Phosphothreonine is present on Thr-101. Residues Arg-115, Arg-125, and Arg-146 each contribute to the substrate site. The residue at position 223 (Lys-223) is an N6-acetyllysine. Mg(2+)-binding residues include Asp-233, Asp-257, and Asp-261. N6-acetyllysine; alternate is present on Lys-343. Residue Lys-343 is modified to N6-succinyllysine; alternate. Lys-350 carries the post-translational modification N6-succinyllysine.

This sequence belongs to the isocitrate and isopropylmalate dehydrogenases family. Heterooligomer of subunits alpha (IDH3A), beta (IDH3B), and gamma (IDH3G) in the apparent ratio of 2:1:1. The heterodimer containing one IDH3A and one IDH3B subunit and the heterodimer containing one IDH3A and one IDH3G subunit assemble into a heterotetramer (which contains two subunits of IDH3A, one of IDH3B and one of IDH3G) and further into the heterooctamer. Requires Mg(2+) as cofactor. The cofactor is Mn(2+).

It localises to the mitochondrion. The catalysed reaction is D-threo-isocitrate + NAD(+) = 2-oxoglutarate + CO2 + NADH. Its activity is regulated as follows. The heterotetramer and the heterodimer composed of IDH3A and IDH3G subunits can be allosterically activated by citrate (CIT) or/and ADP, and the two activators can act independently or synergistically. The heterodimer composed of IDH3A and IDH3B subunits cannot be allosterically regulated and the allosteric regulation of the heterotetramer is through the IDH3G subunit and not the IDH3B subunit. The IDH3G subunit contains the allosteric site which consists of a CIT-binding site and an ADP-binding site, and the binding of CIT and ADP causes conformational changes at the allosteric site which are transmitted to the active site in the catalytic subunit (IDH3A) through a cascade of conformational changes at the heterodimer interface, leading to stabilization of the isocitrate-binding at the active site and thus activation of the enzyme. ATP can activate the heterotetramer and the heterodimer composed of IDH3A and IDH3G subunits at low concentrations but inhibits their activities at high concentrations, whereas ATP exhibits only inhibitory effect on the heterodimer composed of IDH3A and IDH3B subunits. Catalytic subunit of the enzyme which catalyzes the decarboxylation of isocitrate (ICT) into alpha-ketoglutarate. The heterodimer composed of the alpha (IDH3A) and beta (IDH3B) subunits and the heterodimer composed of the alpha (IDH3A) and gamma (IDH3G) subunits, have considerable basal activity but the full activity of the heterotetramer (containing two subunits of IDH3A, one of IDH3B and one of IDH3G) requires the assembly and cooperative function of both heterodimers. This is Isocitrate dehydrogenase [NAD] subunit alpha, mitochondrial (IDH3A) from Sus scrofa (Pig).